The primary structure comprises 1623 residues: ABC transporter C family member 2 (1623 aa).

The next 9 membrane-spanning stretches (helical) occupy residues 37-57, 76-96, 109-129, 145-165, 172-192, 336-356, 440-460, 527-547, and 557-577; these read FVLGISQLVLLVLCLYRIWLA, FLALLAAYATAEPLFRLIMGI, FEAFGLGVKAFAWGAVMVMIL, FAVIYALVGDMVLLNLVLSVK, VLYLYTSEVGAQVLFGILLFM, AWMGYIYAFSIFVGVVFGVLC, VASLIGALLLVLMFPLQTVII, FILNSIPVLVTIVSFGVFTLL, and FTSLSLFAVLRFPLFMLPNII. Residues 302–582 form the ABC transmembrane type-1 1 domain; sequence FWWGGFWKIG…LPNIITQVVN (281 aa). Positions 614–838 constitute an ABC transporter 1 domain; that stretch reads ISIRNGYFSW…GPLFQRLMEN (225 aa). 649–656 is an ATP binding site; that stretch reads GSTGEGKT. The interval 842-890 is disordered; the sequence is VEEYSEENGEAEADQTAEQPVANGNTNGLQMDGSDDKKSKEGNKKGGKS. Positions 845 to 856 are enriched in acidic residues; sequence YSEENGEAEADQ. Positions 857–870 are enriched in polar residues; that stretch reads TAEQPVANGNTNGL. The segment covering 875–885 has biased composition (basic and acidic residues); the sequence is SDDKKSKEGNK. A run of 6 helical transmembrane segments spans residues 914–934, 955–975, 1032–1054, 1058–1077, 1143–1163, and 1177–1197; these read ALGGAWVVMMLLLCYVLTEVF, GPLFYNLIYALLSFGQVLVTL, AVFVNMFMGQVSQLLSTVVLIGI, LSLWAIMPLLVLFYGAYLYY, LGIRLETLGGLMIWLTASFAV, and STMGLLLSYALNITSLLTGVL. The 285-residue stretch at 921-1205 folds into the ABC transmembrane type-1 2 domain; it reads VMMLLLCYVL…VLRLASLAEN (285 aa). Positions 1236–1251 are interaction with calmodulin and FKP42/TWD1; sequence WPSSGSIKFEDVVLRY. The 235-residue stretch at 1242–1476 folds into the ABC transporter 2 domain; that stretch reads IKFEDVVLRY…EGSSFSKMVQ (235 aa). ATP is bound at residue 1276–1283; that stretch reads GRTGAGKS.

This sequence belongs to the ABC transporter superfamily. ABCC family. Conjugate transporter (TC 3.A.1.208) subfamily. As to quaternary structure, interacts with FKBP42/TWD1 and probably with calmodulin (CaM). Ubiquitous, at low levels.

It localises to the vacuole membrane. The catalysed reaction is ATP + H2O + xenobioticSide 1 = ADP + phosphate + xenobioticSide 2.. With respect to regulation, reciprocal promotion of DNP-GS and E(2)17betaG uptake. E(2)17betaG uptake is also stimulated by GSH and S-methyl-glutathione (S-methyl-GS), and, to a lower extent, by GSSG and C3G-GS. Metolachlor-GS and decyl-GS slightly inhibit E(2)17betaG uptake. Its function is as follows. Pump for glutathione S-conjugates. Mediates the transport of S-conjugates such as GSH, S-(2,4-dinitrophenyl)-glutathione (DNP-GS), GSSG, cyanidin 3-glucoside-GS (C3G-GS) and metolachlor-GS (MOC-GS), glucuronides such as 17-beta-estradiol 17-(beta-D-glucuronide) (E(2)17betaG), and of the chlorophyll catabolite such as B.napus nonfluorescent chlorophyll catabolite (Bn-NCC-1). The sequence is that of ABC transporter C family member 2 (ABCC2) from Arabidopsis thaliana (Mouse-ear cress).